A 245-amino-acid polypeptide reads, in one-letter code: Fibroblast growth factor 3 (245 aa).

The N-terminal stretch at 1 to 17 (MGLIWLLLLSLLEPSWP) is a signal peptide. N-linked (GlcNAc...) asparagine glycosylation is present at N65. Disordered stretches follow at residues 137–181 (GSSG…FLPR) and 195–245 (QSSQ…LAVA). Residues 161–173 (GRPRRGFKTRRTQ) are compositionally biased toward basic residues. A compositionally biased stretch (polar residues) spans 226–238 (TLSTRATPSTQLH).

The protein belongs to the heparin-binding growth factors family. In terms of assembly, interacts with FGFR1 and FGFR2. Affinity between fibroblast growth factors (FGFs) and their receptors is increased by heparan sulfate glycosaminoglycans that function as coreceptors. Post-translationally, glycosylated.

The protein resides in the nucleus. It is found in the endoplasmic reticulum. The protein localises to the golgi apparatus. In terms of biological role, plays an important role in the regulation of embryonic development, cell proliferation, and cell differentiation. Required for normal ear development. This is Fibroblast growth factor 3 (Fgf3) from Mus musculus (Mouse).